Reading from the N-terminus, the 782-residue chain is LINE-1 type transposase domain-containing protein 1 (782 aa).

Disordered regions lie at residues 1–30, 90–200, and 338–397; these read MSGV…TATS, QEGD…GGAG, and NKGT…SAEE. 2 stretches are compositionally biased toward basic and acidic residues: residues 11 to 27 and 95 to 107; these read LQKE…ERKT and ISER…KVEE. Residue Ser-136 is modified to Phosphoserine. Basic and acidic residues-rich tracts occupy residues 143 to 158 and 183 to 194; these read SLER…HGRC and EENRLKAPKESP. Residues 347–396 are compositionally biased toward acidic residues; that stretch reads GEEEEISETQGEETSEGETSELGEEEGSESEEEEESSESEEEEESSESAE. Phosphoserine occurs at positions 407, 409, 442, 478, 490, 559, and 567.

This sequence belongs to the transposase 22 family.

The protein is LINE-1 type transposase domain-containing protein 1 (L1td1) of Mus musculus (Mouse).